Reading from the N-terminus, the 584-residue chain is MKAVYLDYLLRIRYTYVFNLKVSYQSERRTYGATEHFVGCLVPKAWNCLADDYTDIKTLLDLLFGVTAVIIFACTFKCFTMTEDGLTKLNLEAFLGVSGNTQELLESLGISAIPDLSNLGASNNNNSGLTFDPNDPSAAAFYIAQQVAAIEHPPPRKMTSSEKTRSENRERKKRWREQNEERNKDNDLRCRVNKKAKKLFGSEPSIEKTNWIEAEFTRRHTKRKEKERACLSQNQSSNASRANSQSLLPDLDLLATNSSANAVLQGSAINNALNALAKDPNLIHSLLTQIDFDPSKSKDGLNLGSLTDVVPPQPPQPEHELAALQEHNEAHDAAMRQYELERQQNAMLPGLASIDGLQALPHLDFSDSAVTNQSHSQSQNSLHPLISQSETHSIFSALSETPTPVSGNGNVADAPPDFSLSQVMPLDLIAPSMQPSAVSSPMSESHVQISSEMPRTGMSALPMRPRSQNVDKHRKFPYYNKRNAVTTPSSPYDGAQSGSPQFPPFELPPHNYSQAQSPNLATPSPSFSSLPDVSLPPIVKPNLMSEPTPTNSDEKSHALGFPPPPGQKIEFQRSSSKNGTAKSD.

Disordered stretches follow at residues 151–188, 222–243, 399–418, and 433–584; these read EHPP…DNDL, KRKE…SRAN, SETP…PPDF, and MQPS…AKSD. The span at 159-188 shows a compositional bias: basic and acidic residues; the sequence is TSSEKTRSENRERKKRWREQNEERNKDNDL. Residues 231–243 are compositionally biased toward low complexity; that stretch reads LSQNQSSNASRAN. 5 stretches are compositionally biased toward polar residues: residues 399–409, 433–453, 483–500, 511–531, and 572–584; these read SETPTPVSGNG, MQPS…SSEM, NAVT…SGSP, NYSQ…SSLP, and QRSS…AKSD.

This is an uncharacterized protein from Schizosaccharomyces pombe (strain 972 / ATCC 24843) (Fission yeast).